The primary structure comprises 395 residues: Calsequestrin-1 (395 aa).

The N-terminal stretch at Met-1–Gly-28 is a signal peptide. Tyr-37 is modified (phosphotyrosine). Ser-75 carries the phosphoserine modification. Thr-118 carries the post-translational modification Phosphothreonine. Ser-210 carries the post-translational modification Phosphoserine. N-linked (GlcNAc...) asparagine glycosylation is present at Asn-344. Residues Glu-376 to Asp-395 are disordered.

This sequence belongs to the calsequestrin family. As to quaternary structure, monomer; increases in response to a depletion of intracellular calcium. Homodimer. Homotetramer and homopolymer. Can form linear homooligomers. Ca(2+) ions promote oligomerization. Interacts (via C-terminal end and preferentially with the monomeric form) with STIM1; this interaction increases in response to a depletion of intracellular calcium, decreases both STIM1 aggregation and clustering, interaction of STIM1 with ORAI1 and store-operated Ca(2+) entry (SOCE) activity. Interacts with ASPH and TRDN. Post-translationally, N-glycosylated. Detected in skeletal muscle (at protein level). Detected in skeletal muscle.

The protein localises to the endoplasmic reticulum. It localises to the sarcoplasmic reticulum. It is found in the sarcoplasmic reticulum lumen. The protein resides in the mitochondrion matrix. Its subcellular location is the sarcoplasmic reticulum membrane. In terms of biological role, calsequestrin is a high-capacity, moderate affinity, calcium-binding protein and thus acts as an internal calcium store in muscle. Calcium ions are bound by clusters of acidic residues at the protein surface, often at the interface between subunits. Can bind around 80 Ca(2+) ions. Regulates the release of lumenal Ca(2+) via the calcium release channel RYR1; this plays an important role in triggering muscle contraction. Negatively regulates store-operated Ca(2+) entry (SOCE) activity. This is Calsequestrin-1 (CASQ1) from Oryctolagus cuniculus (Rabbit).